Reading from the N-terminus, the 860-residue chain is Envelope glycoprotein (860 aa).

The propeptide occupies 1–6; that stretch reads MVSIAF. Topologically, residues 7–614 are extracellular; it reads YGGIPGGIST…GKDLWSHIGN (608 aa). Asn-40, Asn-112, Asn-141, Asn-148, Asn-186, Asn-201, Asn-214, Asn-235, Asn-244, Asn-308, Asn-337, Asn-340, Asn-346, Asn-369, Asn-400, Asn-407, Asn-412, and Asn-423 each carry an N-linked (GlcNAc...) asparagine; by host glycan. The tract at residues 447–467 is fusion peptide; the sequence is FGISAIVAAIVAATAIAASAT. N-linked (GlcNAc...) asparagine; by host glycosylation is found at Asn-484 and Asn-491. The tract at residues 499–514 is immunosuppression; sequence LIEQQIKILYAMILQT. N-linked (GlcNAc...) asparagine; by host glycans are attached at residues Asn-551 and Asn-558. Coiled-coil stretches lie at residues 577–625 and 664–700; these read ILTT…SIIK and KKFY…YCKQ. The helical transmembrane segment at 615-635 threads the bilayer; it reads WIPGLGASIIKYIVMFLLIYL. Topologically, residues 636–860 are cytoplasmic; it reads LLTSSPKILR…TSHVSMPQYV (225 aa). The disordered stretch occupies residues 746 to 765; that stretch reads AAINEHKNGSGGNNPHQGSL.

In terms of assembly, the mature envelope protein (Env) consists of a trimer of SU-TM heterodimers attached by noncovalent interactions or by a labile interchain disulfide bond. Specific enzymatic cleavages in vivo yield mature proteins. Envelope glycoproteins are synthesized as an inactive precursor that is N-glycosylated and processed likely by host cell furin or by a furin-like protease in the Golgi to yield the mature SU and TM proteins. The cleavage site between SU and TM requires the minimal sequence [KR]-X-[KR]-R.

It is found in the virion membrane. Its subcellular location is the host cell membrane. The surface protein (SU) attaches the virus to the host cell by binding to its receptor. This interaction triggers the refolding of the transmembrane protein (TM) and is thought to activate its fusogenic potential by unmasking its fusion peptide. Fusion occurs at the host cell plasma membrane. Its function is as follows. The transmembrane protein (TM) acts as a class I viral fusion protein. Under the current model, the protein has at least 3 conformational states: pre-fusion native state, pre-hairpin intermediate state, and post-fusion hairpin state. During viral and target cell membrane fusion, the coiled coil regions (heptad repeats) assume a trimer-of-hairpins structure, positioning the fusion peptide in close proximity to the C-terminal region of the ectodomain. The formation of this structure appears to drive apposition and subsequent fusion of viral and target cell membranes. Membranes fusion leads to delivery of the nucleocapsid into the cytoplasm. The polypeptide is Envelope glycoprotein (env) (Equine infectious anemia virus (isolate P3.2-5) (EIAV)).